The sequence spans 181 residues: Large ribosomal subunit protein uL5 (181 aa).

The protein belongs to the universal ribosomal protein uL5 family. As to quaternary structure, part of the 50S ribosomal subunit; part of the 5S rRNA/L5/L18/L25 subcomplex. Contacts the 5S rRNA and the P site tRNA. Forms a bridge to the 30S subunit in the 70S ribosome.

Functionally, this is one of the proteins that bind and probably mediate the attachment of the 5S RNA into the large ribosomal subunit, where it forms part of the central protuberance. In the 70S ribosome it contacts protein S13 of the 30S subunit (bridge B1b), connecting the 2 subunits; this bridge is implicated in subunit movement. Contacts the P site tRNA; the 5S rRNA and some of its associated proteins might help stabilize positioning of ribosome-bound tRNAs. The protein is Large ribosomal subunit protein uL5 of Helicobacter pylori (strain G27).